The following is a 124-amino-acid chain: uncharacterized protein (124 aa).

A signal peptide spans 1–22 (MGTSSVLLMIASSLILLEVVMT).

This is an uncharacterized protein from Caenorhabditis elegans.